A 640-amino-acid polypeptide reads, in one-letter code: Probable serine/threonine-protein kinase samkA (640 aa).

One can recognise an SAM domain in the interval 21–84 (WNNEKIIKWL…SEFEILKNNY (64 aa)). Residues 73 to 100 (FKSEFEILKNNYDNNNNNNNNNNNNNNN) adopt a coiled-coil conformation. A disordered region spans residues 84–165 (YDNNNNNNNN…INFNSNSNIT (82 aa)). Positions 191-437 (YEYVESISLG…SKDLQKLSWF (247 aa)) constitute a Protein kinase domain. ATP contacts are provided by residues 197–205 (ISLGVFSVV) and Lys-221. The active-site Proton acceptor is the Asp-312. The interval 448–482 (QELTKSTTNTTTTTTTTTTPPPPPSPSSSSPSMNE) is disordered. The segment covering 453-465 (STTNTTTTTTTTT) has biased composition (low complexity).

The protein belongs to the protein kinase superfamily. Ser/Thr protein kinase family.

It catalyses the reaction L-seryl-[protein] + ATP = O-phospho-L-seryl-[protein] + ADP + H(+). It carries out the reaction L-threonyl-[protein] + ATP = O-phospho-L-threonyl-[protein] + ADP + H(+). The protein is Probable serine/threonine-protein kinase samkA (samkA) of Dictyostelium discoideum (Social amoeba).